A 211-amino-acid chain; its full sequence is Large ribosomal subunit protein bL25 (211 aa).

The protein belongs to the bacterial ribosomal protein bL25 family. CTC subfamily. In terms of assembly, part of the 50S ribosomal subunit; part of the 5S rRNA/L5/L18/L25 subcomplex. Contacts the 5S rRNA. Binds to the 5S rRNA independently of L5 and L18.

Functionally, this is one of the proteins that binds to the 5S RNA in the ribosome where it forms part of the central protuberance. This chain is Large ribosomal subunit protein bL25, found in Anaplasma phagocytophilum (strain HZ).